Reading from the N-terminus, the 228-residue chain is Phosphoribosylformylglycinamidine synthase subunit PurQ (228 aa).

Residues 3 to 226 (FAVIVFPGSN…VKYWRETHVV (224 aa)) form the Glutamine amidotransferase type-1 domain. Cysteine 86 acts as the Nucleophile in catalysis. Residues histidine 195 and glutamate 197 contribute to the active site.

Part of the FGAM synthase complex composed of 1 PurL, 1 PurQ and 2 PurS subunits.

It localises to the cytoplasm. The catalysed reaction is N(2)-formyl-N(1)-(5-phospho-beta-D-ribosyl)glycinamide + L-glutamine + ATP + H2O = 2-formamido-N(1)-(5-O-phospho-beta-D-ribosyl)acetamidine + L-glutamate + ADP + phosphate + H(+). The enzyme catalyses L-glutamine + H2O = L-glutamate + NH4(+). Its pathway is purine metabolism; IMP biosynthesis via de novo pathway; 5-amino-1-(5-phospho-D-ribosyl)imidazole from N(2)-formyl-N(1)-(5-phospho-D-ribosyl)glycinamide: step 1/2. Functionally, part of the phosphoribosylformylglycinamidine synthase complex involved in the purines biosynthetic pathway. Catalyzes the ATP-dependent conversion of formylglycinamide ribonucleotide (FGAR) and glutamine to yield formylglycinamidine ribonucleotide (FGAM) and glutamate. The FGAM synthase complex is composed of three subunits. PurQ produces an ammonia molecule by converting glutamine to glutamate. PurL transfers the ammonia molecule to FGAR to form FGAM in an ATP-dependent manner. PurS interacts with PurQ and PurL and is thought to assist in the transfer of the ammonia molecule from PurQ to PurL. The polypeptide is Phosphoribosylformylglycinamidine synthase subunit PurQ (Geobacillus sp. (strain WCH70)).